A 489-amino-acid chain; its full sequence is Phenylalanine--tRNA ligase alpha subunit (489 aa).

Residues threonine 316, 355-357 (QLD), phenylalanine 395, and phenylalanine 420 each bind L-phenylalanine.

Belongs to the class-II aminoacyl-tRNA synthetase family. Phe-tRNA synthetase alpha subunit type 2 subfamily. Tetramer of two alpha and two beta subunits. Requires Mg(2+) as cofactor.

The protein localises to the cytoplasm. The catalysed reaction is tRNA(Phe) + L-phenylalanine + ATP = L-phenylalanyl-tRNA(Phe) + AMP + diphosphate + H(+). The chain is Phenylalanine--tRNA ligase alpha subunit from Pyrobaculum aerophilum (strain ATCC 51768 / DSM 7523 / JCM 9630 / CIP 104966 / NBRC 100827 / IM2).